A 45-amino-acid chain; its full sequence is Photosystem II reaction center protein K (45 aa).

A propeptide spanning residues 1-8 (MEAALLLA) is cleaved from the precursor. A helical membrane pass occupies residues 24 to 44 (LPIIPLFFLALAFVWQAAVGF).

This sequence belongs to the PsbK family. PSII is composed of 1 copy each of membrane proteins PsbA, PsbB, PsbC, PsbD, PsbE, PsbF, PsbH, PsbI, PsbJ, PsbK, PsbL, PsbM, PsbT, PsbX, PsbY, PsbZ, Psb30/Ycf12, peripheral proteins PsbO, CyanoQ (PsbQ), PsbU, PsbV and a large number of cofactors. It forms dimeric complexes.

The protein resides in the cellular thylakoid membrane. In terms of biological role, one of the components of the core complex of photosystem II (PSII). PSII is a light-driven water:plastoquinone oxidoreductase that uses light energy to abstract electrons from H(2)O, generating O(2) and a proton gradient subsequently used for ATP formation. It consists of a core antenna complex that captures photons, and an electron transfer chain that converts photonic excitation into a charge separation. This chain is Photosystem II reaction center protein K, found in Rippkaea orientalis (strain PCC 8801 / RF-1) (Cyanothece sp. (strain PCC 8801)).